The chain runs to 144 residues: Prefoldin subunit alpha (144 aa).

It belongs to the prefoldin subunit alpha family. Heterohexamer of two alpha and four beta subunits.

The protein localises to the cytoplasm. Molecular chaperone capable of stabilizing a range of proteins. Seems to fulfill an ATP-independent, HSP70-like function in archaeal de novo protein folding. This Methanosarcina barkeri (strain Fusaro / DSM 804) protein is Prefoldin subunit alpha.